A 259-amino-acid polypeptide reads, in one-letter code: MDSLHIGSYTFSSRLILGTGKFSSPGVMLEAVKASGAQLVTVALRRFNREQPGDDLFTPLTSIPGITLMPNTSGASTAAEAVQAARIARELSGSPFIKVEIHPNPQHLMPDPIETYEASKILAKEGFLVMPYIPADPVLAKRLEEAGCVSVMPLGSAIGSGQGLATAEMLKIIIRESTIPVIVDAGLRSPSEAALAMEMGCDAVLVNSAVAVAGNPPVMAEAFAEAVAAGRKAFTAGIMEKSGMAVATSPLTSFLGTEA.

Residue lysine 98 is the Schiff-base intermediate with DXP of the active site. 1-deoxy-D-xylulose 5-phosphate is bound by residues glycine 159, 185 to 186, and 207 to 208; these read AG and NS.

Belongs to the ThiG family. Homotetramer. Forms heterodimers with either ThiH or ThiS.

It localises to the cytoplasm. It catalyses the reaction [ThiS sulfur-carrier protein]-C-terminal-Gly-aminoethanethioate + 2-iminoacetate + 1-deoxy-D-xylulose 5-phosphate = [ThiS sulfur-carrier protein]-C-terminal Gly-Gly + 2-[(2R,5Z)-2-carboxy-4-methylthiazol-5(2H)-ylidene]ethyl phosphate + 2 H2O + H(+). It functions in the pathway cofactor biosynthesis; thiamine diphosphate biosynthesis. Catalyzes the rearrangement of 1-deoxy-D-xylulose 5-phosphate (DXP) to produce the thiazole phosphate moiety of thiamine. Sulfur is provided by the thiocarboxylate moiety of the carrier protein ThiS. In vitro, sulfur can be provided by H(2)S. This is Thiazole synthase from Chlorobium limicola (strain DSM 245 / NBRC 103803 / 6330).